Consider the following 294-residue polypeptide: Flavin-dependent thymidylate synthase (294 aa).

Residues 27-250 (GFIRVIDYMG…PFTYEAFEEY (224 aa)) enclose the ThyX domain. FAD is bound by residues T73, 96–98 (RHR), and E104. DUMP contacts are provided by residues 93–96 (QWIR), 104–108 (EYSAR), and R189. The ThyX motif signature appears at 96–106 (RHRTASVNEYS). Residues 205–207 (NLH) and H211 contribute to the FAD site. Residue R216 participates in dUMP binding. The active-site Involved in ionization of N3 of dUMP, leading to its activation is the R216.

Belongs to the thymidylate synthase ThyX family. In terms of assembly, homotetramer. FAD is required as a cofactor.

It carries out the reaction dUMP + (6R)-5,10-methylene-5,6,7,8-tetrahydrofolate + NADPH + H(+) = dTMP + (6S)-5,6,7,8-tetrahydrofolate + NADP(+). Its pathway is pyrimidine metabolism; dTTP biosynthesis. Functionally, catalyzes the reductive methylation of 2'-deoxyuridine-5'-monophosphate (dUMP) to 2'-deoxythymidine-5'-monophosphate (dTMP) while utilizing 5,10-methylenetetrahydrofolate (mTHF) as the methyl donor, and NADPH and FADH(2) as the reductant. This is Flavin-dependent thymidylate synthase from Rickettsia typhi (strain ATCC VR-144 / Wilmington).